The sequence spans 215 residues: Cytochrome b6 (215 aa).

A helical transmembrane segment spans residues 32 to 52; that stretch reads IFYCLGGITLTCFLVQVATGF. Cys-35 contacts heme c. Heme b is bound by residues His-86 and His-100. 3 consecutive transmembrane segments (helical) span residues 90–110, 116–136, and 186–206; these read ASMM…TGGF, LTWV…VTGY, and LHTF…FSMI. 2 residues coordinate heme b: His-187 and His-202.

Belongs to the cytochrome b family. PetB subfamily. The 4 large subunits of the cytochrome b6-f complex are cytochrome b6, subunit IV (17 kDa polypeptide, PetD), cytochrome f and the Rieske protein, while the 4 small subunits are PetG, PetL, PetM and PetN. The complex functions as a dimer. Heme b is required as a cofactor. It depends on heme c as a cofactor.

Its subcellular location is the plastid. It is found in the chloroplast thylakoid membrane. In terms of biological role, component of the cytochrome b6-f complex, which mediates electron transfer between photosystem II (PSII) and photosystem I (PSI), cyclic electron flow around PSI, and state transitions. This is Cytochrome b6 from Lotus japonicus (Lotus corniculatus var. japonicus).